The following is a 316-amino-acid chain: MRSALATGRRVQVRVPATSANLGPGFDTLGLALALYDDLTVTVRDAPGATVDVRGVGAGEVPTDETNLVVTAIAHTFAAFDQPMPGLDLVAENRIPHGRGLGSSGAAIVSGIMAAQGLLAGTVEIDADALLRLATEMEGHPDNVAPALFGGLTIAWVDGQGPQHKKLAVHRGVSPLVLVPVATMSTALARSLQPESVPHEDAIFNVSRSALLIAALIQSPELLLAATEDRLHQDYRAAAMPETNELVHLLRERGYAAVVSGAGPSLLVLGSDPGQRLTAAELVAERSTNPWTALMLAVDVKGSTVQVVDEGSAPAA.

Residue 96 to 106 (PHGRGLGSSGA) coordinates ATP.

Belongs to the GHMP kinase family. Homoserine kinase subfamily.

It is found in the cytoplasm. The enzyme catalyses L-homoserine + ATP = O-phospho-L-homoserine + ADP + H(+). Its pathway is amino-acid biosynthesis; L-threonine biosynthesis; L-threonine from L-aspartate: step 4/5. Functionally, catalyzes the ATP-dependent phosphorylation of L-homoserine to L-homoserine phosphate. The polypeptide is Homoserine kinase (Clavibacter michiganensis subsp. michiganensis (strain NCPPB 382)).